We begin with the raw amino-acid sequence, 491 residues long: Glycogen synthase 2 (491 aa).

An ADP-alpha-D-glucose-binding site is contributed by Lys-16.

This sequence belongs to the glycosyltransferase 1 family. Bacterial/plant glycogen synthase subfamily.

It carries out the reaction [(1-&gt;4)-alpha-D-glucosyl](n) + ADP-alpha-D-glucose = [(1-&gt;4)-alpha-D-glucosyl](n+1) + ADP + H(+). It functions in the pathway glycan biosynthesis; glycogen biosynthesis. In terms of biological role, synthesizes alpha-1,4-glucan chains using ADP-glucose. This Nitrosococcus oceani (strain ATCC 19707 / BCRC 17464 / JCM 30415 / NCIMB 11848 / C-107) protein is Glycogen synthase 2.